The primary structure comprises 374 residues: Guanine nucleotide-binding protein subunit alpha-15 (374 aa).

A G-alpha domain is found at 41–374 (EELKLLLLGP…ARYLDEINLL (334 aa)). The tract at residues 44 to 57 (KLLLLGPGESGKST) is G1 motif. Residues 49–56 (GPGESGKS), 183–189 (LRSRMPT), 208–212 (DVGGQ), 277–280 (NKTD), and Ala-346 each bind GTP. The Mg(2+) site is built by Ser-56 and Thr-189. A G2 motif region spans residues 181–189 (DVLRSRMPT). A G3 motif region spans residues 204–213 (LRIVDVGGQR). The tract at residues 273-280 (ILFLNKTD) is G4 motif. The G5 motif stretch occupies residues 344–349 (TCATDT).

It belongs to the G-alpha family. G(q) subfamily. In terms of assembly, g proteins are composed of 3 units; alpha, beta and gamma. The alpha chain contains the guanine nucleotide binding site. As to expression, expressed primarily in hematopoietic cells. Coexpressed with EDG6 at the same relative levels in all tissues examined, with the highest levels in adult spleen and lung.

In terms of biological role, guanine nucleotide-binding proteins (G proteins) are involved as modulators or transducers in various transmembrane signaling systems. The protein is Guanine nucleotide-binding protein subunit alpha-15 (Gna15) of Mus musculus (Mouse).